The primary structure comprises 140 residues: Lysozyme c-1 (140 aa).

A signal peptide spans 1 to 20; it reads MKVFSTVLLAIVACCAVAEA. The C-type lysozyme domain occupies 21 to 140; it reads KTFGKCELAK…KKLPNVSSCF (120 aa). 4 disulfide bridges follow: cysteine 26-cysteine 139, cysteine 47-cysteine 128, cysteine 81-cysteine 94, and cysteine 90-cysteine 108. Active-site residues include glutamate 52 and aspartate 69.

Belongs to the glycosyl hydrolase 22 family. Expressed in salivary glands and Malpighian tubules.

It carries out the reaction Hydrolysis of (1-&gt;4)-beta-linkages between N-acetylmuramic acid and N-acetyl-D-glucosamine residues in a peptidoglycan and between N-acetyl-D-glucosamine residues in chitodextrins.. In terms of biological role, lysozymes have primarily a bacteriolytic function; those in tissues and body fluids are associated with the monocyte-macrophage system and enhance the activity of immunoagents. This chain is Lysozyme c-1, found in Anopheles gambiae (African malaria mosquito).